A 309-amino-acid chain; its full sequence is Postacrosomal sheath WW domain-binding protein (309 aa).

Residues 45-87 (GRKTGTLFLTSYRVIFITSCSISDPMLSFMMPFDLMTNLTVEQ) enclose the GRAM domain. Tandem repeats lie at residues 175–181 (YGAPPAG), 182–188 (YGAPPPG), 189–195 (YGAPPAG), 217–223 (YGAPPLG), 224–230 (YGAPPAG), 231–237 (YGAPPLG), 238–244 (YGAPPLG), 245–251 (YGTPPLG), 252–258 (YGAPPLG), and 259–265 (YGAPPAG). The segment at 175–265 (YGAPPAGYGA…PLGYGAPPAG (91 aa)) is 10 X 7 AA tandem repeat of Y-G-X-P-P-X-G. A PPxY motif motif is present at residues 186-189 (PPGY). Residues 251–272 (GYGAPPLGYGAPPAGNEGPPAG) show a composition bias toward low complexity. A disordered region spans residues 251 to 309 (GYGAPPLGYGAPPAGNEGPPAGYRASPAGSGARPQESTAAQAPENEASLPSASSSQVHS). A compositionally biased stretch (polar residues) spans 298 to 309 (SLPSASSSQVHS).

As to expression, expressed in testis.

May play a role in meiotic resumption and pronuclear formation, mediated by a WW domain-signaling pathway during fertilization. The sequence is that of Postacrosomal sheath WW domain-binding protein (WBP2NL) from Homo sapiens (Human).